The following is a 507-amino-acid chain: ATP synthase subunit alpha, chloroplastic (507 aa).

170 to 177 serves as a coordination point for ATP; the sequence is GDRQTGKT.

Belongs to the ATPase alpha/beta chains family. As to quaternary structure, F-type ATPases have 2 components, CF(1) - the catalytic core - and CF(0) - the membrane proton channel. CF(1) has five subunits: alpha(3), beta(3), gamma(1), delta(1), epsilon(1). CF(0) has four main subunits: a, b, b' and c.

It is found in the plastid. The protein localises to the chloroplast thylakoid membrane. It catalyses the reaction ATP + H2O + 4 H(+)(in) = ADP + phosphate + 5 H(+)(out). Produces ATP from ADP in the presence of a proton gradient across the membrane. The alpha chain is a regulatory subunit. The polypeptide is ATP synthase subunit alpha, chloroplastic (Eucalyptus globulus subsp. globulus (Tasmanian blue gum)).